The primary structure comprises 290 residues: uncharacterized protein (290 aa).

It localises to the cytoplasm. This is an uncharacterized protein from Saccharomyces cerevisiae (strain ATCC 204508 / S288c) (Baker's yeast).